Here is a 66-residue protein sequence, read N- to C-terminus: Large ribosomal subunit protein uL29 (66 aa).

The protein belongs to the universal ribosomal protein uL29 family.

The protein is Large ribosomal subunit protein uL29 (rpmC) of Helicobacter pylori (strain J99 / ATCC 700824) (Campylobacter pylori J99).